Consider the following 208-residue polypeptide: Thioesterase 1/protease 1/lysophospholipase L1 (208 aa).

An N-terminal signal peptide occupies residues 1-26 (MMNFNNVFRWHLPFLFLVLLTFRAAA). Serine 36 acts as the Nucleophile in catalysis. Substrate contacts are provided by glycine 70 and asparagine 99. Catalysis depends on residues aspartate 180 and histidine 183.

The protein belongs to the 'GDSL' lipolytic enzyme family. In terms of assembly, monomer or homotetramer.

It is found in the periplasm. The enzyme catalyses a fatty acyl-CoA + H2O = a fatty acid + CoA + H(+). It carries out the reaction hexadecanoyl-CoA + H2O = hexadecanoate + CoA + H(+). It catalyses the reaction (9Z)-hexadecenoyl-CoA + H2O = (9Z)-hexadecenoate + CoA + H(+). The catalysed reaction is octadecanoyl-CoA + H2O = octadecanoate + CoA + H(+). The enzyme catalyses (9Z)-octadecenoyl-CoA + H2O = (9Z)-octadecenoate + CoA + H(+). It carries out the reaction (9Z)-octadecenoyl-[ACP] + H2O = (9Z)-octadecenoate + holo-[ACP] + H(+). It catalyses the reaction (11Z)-octadecenoyl-CoA + H2O = (11Z)-octadecenoate + CoA + H(+). The catalysed reaction is tetradecanoyl-CoA + H2O = tetradecanoate + CoA + H(+). The enzyme catalyses (5Z,8Z,11Z,14Z)-eicosatetraenoyl-CoA + H2O = (5Z,8Z,11Z,14Z)-eicosatetraenoate + CoA + H(+). It carries out the reaction dodecanoyl-CoA + H2O = dodecanoate + CoA + H(+). It catalyses the reaction decanoyl-CoA + H2O = decanoate + CoA + H(+). The catalysed reaction is hexanoyl-CoA + H2O = hexanoate + CoA + H(+). The enzyme catalyses a 1-acyl-sn-glycero-3-phosphocholine + H2O = sn-glycerol 3-phosphocholine + a fatty acid + H(+). It carries out the reaction a phenyl acetate + H2O = a phenol + acetate + H(+). It catalyses the reaction a butanoate ester + H2O = an aliphatic alcohol + butanoate + H(+). The catalysed reaction is a hexanoate ester + H2O = an aliphatic alcohol + hexanoate + H(+). The enzyme catalyses an octanoate ester + H2O = an aliphatic alcohol + octanoate + H(+). Its function is as follows. TesA is a multifunctional esterase that can act as a thioesterase, arylesterase, lysophospholipase and protease. The protein is Thioesterase 1/protease 1/lysophospholipase L1 (tesA) of Escherichia coli O6:H1 (strain CFT073 / ATCC 700928 / UPEC).